The following is a 186-amino-acid chain: Elongation factor P (186 aa).

It belongs to the elongation factor P family.

It is found in the cytoplasm. The protein operates within protein biosynthesis; polypeptide chain elongation. Functionally, involved in peptide bond synthesis. Stimulates efficient translation and peptide-bond synthesis on native or reconstituted 70S ribosomes in vitro. Probably functions indirectly by altering the affinity of the ribosome for aminoacyl-tRNA, thus increasing their reactivity as acceptors for peptidyl transferase. This is Elongation factor P from Prochlorococcus marinus subsp. pastoris (strain CCMP1986 / NIES-2087 / MED4).